Here is a 95-residue protein sequence, read N- to C-terminus: MSYELIAAKRVDLGTGASRRLRRAGKLPAVVYGAGKDAVSLELDHNTLYHAVKHADFHTSVLELVIDGQKEQVKVAAFQMHPYKQQVLHIDFARV.

Belongs to the bacterial ribosomal protein bL25 family. In terms of assembly, part of the 50S ribosomal subunit; part of the 5S rRNA/L5/L18/L25 subcomplex. Contacts the 5S rRNA. Binds to the 5S rRNA independently of L5 and L18.

This is one of the proteins that binds to the 5S RNA in the ribosome where it forms part of the central protuberance. In Chromobacterium violaceum (strain ATCC 12472 / DSM 30191 / JCM 1249 / CCUG 213 / NBRC 12614 / NCIMB 9131 / NCTC 9757 / MK), this protein is Large ribosomal subunit protein bL25.